The following is a 320-amino-acid chain: ATP-dependent 6-phosphofructokinase (320 aa).

Gly-12 serves as a coordination point for ATP. ADP contacts are provided by residues 22-26 (RGVVR) and 55-60 (RYSVSD). ATP-binding positions include 73-74 (RF) and 103-106 (GDGS). Mg(2+) is bound at residue Asp-104. 126–128 (TID) serves as a coordination point for substrate. The Proton acceptor role is filled by Asp-128. Position 155 (Arg-155) interacts with ADP. Residues Arg-163 and 170–172 (MGR) each bind substrate. ADP contacts are provided by residues 186 to 188 (GCE), Lys-212, and 214 to 216 (KKH). Substrate contacts are provided by residues Glu-223, Arg-244, and 250-253 (HIQR).

The protein belongs to the phosphofructokinase type A (PFKA) family. ATP-dependent PFK group I subfamily. Prokaryotic clade 'B1' sub-subfamily. As to quaternary structure, homotetramer. Mg(2+) serves as cofactor.

It is found in the cytoplasm. The enzyme catalyses beta-D-fructose 6-phosphate + ATP = beta-D-fructose 1,6-bisphosphate + ADP + H(+). It functions in the pathway carbohydrate degradation; glycolysis; D-glyceraldehyde 3-phosphate and glycerone phosphate from D-glucose: step 3/4. With respect to regulation, allosterically activated by ADP and other diphosphonucleosides, and allosterically inhibited by phosphoenolpyruvate. Catalyzes the phosphorylation of D-fructose 6-phosphate to fructose 1,6-bisphosphate by ATP, the first committing step of glycolysis. The sequence is that of ATP-dependent 6-phosphofructokinase from Citrobacter koseri (strain ATCC BAA-895 / CDC 4225-83 / SGSC4696).